We begin with the raw amino-acid sequence, 520 residues long: Sodium-dependent dicarboxylate transporter SdcS (520 aa).

The next 14 helical transmembrane spans lie at alanine 30–phenylalanine 50, leucine 55–threonine 75, alanine 77–leucine 97, serine 104–methionine 124, serine 160–isoleucine 180, isoleucine 207–isoleucine 227, phenylalanine 242–leucine 262, lysine 298–leucine 318, valine 323–isoleucine 343, glutamate 362–serine 382, glycine 399–valine 419, methionine 428–methionine 448, alanine 452–phenylalanine 472, and leucine 491–isoleucine 511.

This sequence belongs to the SLC13A/DASS transporter (TC 2.A.47) family. NADC subfamily.

Its subcellular location is the cell membrane. Its function is as follows. Mediates the transport of the dicarboxylates fumarate, malate, and succinate across the cytoplasmic membrane via a Na(+)-electrochemical gradient. The protein is Sodium-dependent dicarboxylate transporter SdcS (sdcS) of Staphylococcus aureus (strain bovine RF122 / ET3-1).